We begin with the raw amino-acid sequence, 281 residues long: Small ribosomal subunit protein uS2 (281 aa).

The protein belongs to the universal ribosomal protein uS2 family.

In Chlamydia muridarum (strain MoPn / Nigg), this protein is Small ribosomal subunit protein uS2 (rpsB).